A 463-amino-acid chain; its full sequence is ATP-dependent protease ATPase subunit HslU (463 aa).

Residues Val21, 63–68 (GVGKTE), Asp276, Glu341, and Arg413 each bind ATP.

The protein belongs to the ClpX chaperone family. HslU subfamily. A double ring-shaped homohexamer of HslV is capped on each side by a ring-shaped HslU homohexamer. The assembly of the HslU/HslV complex is dependent on binding of ATP.

It localises to the cytoplasm. Functionally, ATPase subunit of a proteasome-like degradation complex; this subunit has chaperone activity. The binding of ATP and its subsequent hydrolysis by HslU are essential for unfolding of protein substrates subsequently hydrolyzed by HslV. HslU recognizes the N-terminal part of its protein substrates and unfolds these before they are guided to HslV for hydrolysis. The polypeptide is ATP-dependent protease ATPase subunit HslU (Thermotoga petrophila (strain ATCC BAA-488 / DSM 13995 / JCM 10881 / RKU-1)).